The following is a 288-amino-acid chain: ATP synthase gamma chain (288 aa).

It belongs to the ATPase gamma chain family. F-type ATPases have 2 components, CF(1) - the catalytic core - and CF(0) - the membrane proton channel. CF(1) has five subunits: alpha(3), beta(3), gamma(1), delta(1), epsilon(1). CF(0) has three main subunits: a, b and c.

The protein localises to the cell inner membrane. Produces ATP from ADP in the presence of a proton gradient across the membrane. The gamma chain is believed to be important in regulating ATPase activity and the flow of protons through the CF(0) complex. The sequence is that of ATP synthase gamma chain from Polaromonas naphthalenivorans (strain CJ2).